The chain runs to 202 residues: Nucleoid occlusion factor SlmA (202 aa).

An HTH tetR-type domain is found at Lys-14–Leu-75. The segment at residues Thr-38–Phe-57 is a DNA-binding region (H-T-H motif).

This sequence belongs to the nucleoid occlusion factor SlmA family. Homodimer. Interacts with FtsZ.

It localises to the cytoplasm. The protein resides in the nucleoid. Functionally, required for nucleoid occlusion (NO) phenomenon, which prevents Z-ring formation and cell division over the nucleoid. Acts as a DNA-associated cell division inhibitor that binds simultaneously chromosomal DNA and FtsZ, and disrupts the assembly of FtsZ polymers. SlmA-DNA-binding sequences (SBS) are dispersed on non-Ter regions of the chromosome, preventing FtsZ polymerization at these regions. The sequence is that of Nucleoid occlusion factor SlmA from Haemophilus ducreyi (strain 35000HP / ATCC 700724).